A 193-amino-acid polypeptide reads, in one-letter code: Acyl carrier protein phosphodiesterase (193 aa).

Belongs to the AcpH family.

The enzyme catalyses holo-[ACP] + H2O = apo-[ACP] + (R)-4'-phosphopantetheine + H(+). In terms of biological role, converts holo-ACP to apo-ACP by hydrolytic cleavage of the phosphopantetheine prosthetic group from ACP. This chain is Acyl carrier protein phosphodiesterase, found in Escherichia coli O139:H28 (strain E24377A / ETEC).